Here is a 223-residue protein sequence, read N- to C-terminus: ATP-dependent dethiobiotin synthetase BioD (223 aa).

Thr-16 lines the Mg(2+) pocket. Residue Lys-37 is part of the active site. Residue Ser-41 coordinates substrate. Positions 50 and 111 each coordinate Mg(2+). ATP-binding positions include Asp-50, 111–114 (EGAG), and 171–172 (NR).

This sequence belongs to the dethiobiotin synthetase family. As to quaternary structure, homodimer. It depends on Mg(2+) as a cofactor.

It localises to the cytoplasm. It catalyses the reaction (7R,8S)-7,8-diammoniononanoate + CO2 + ATP = (4R,5S)-dethiobiotin + ADP + phosphate + 3 H(+). It functions in the pathway cofactor biosynthesis; biotin biosynthesis; biotin from 7,8-diaminononanoate: step 1/2. Functionally, catalyzes a mechanistically unusual reaction, the ATP-dependent insertion of CO2 between the N7 and N8 nitrogen atoms of 7,8-diaminopelargonic acid (DAPA, also called 7,8-diammoniononanoate) to form a ureido ring. This chain is ATP-dependent dethiobiotin synthetase BioD, found in Anaeromyxobacter dehalogenans (strain 2CP-1 / ATCC BAA-258).